Here is a 1314-residue protein sequence, read N- to C-terminus: Ubinuclein-2 (1314 aa).

Positions 1–113 (MAEPRRVAFI…PPPRPPKETV (113 aa)) are disordered. Ser13 carries the post-translational modification Phosphoserine. Composition is skewed to basic and acidic residues over residues 16–31 (RRRE…EPPR) and 55–67 (ARDK…EVSR). Residues 81-96 (PEPPPPPLPLQTPPPR) show a composition bias toward pro residues. Thr229 carries the phosphothreonine modification. A Phosphoserine modification is found at Ser236. Residues 236–288 (SDTEEDDFTDNQKHKPPKVPKIKEDDIEVKKRKRKEEGEKEKKPRKKVPKQLG) form a disordered region. Position 238 is a phosphothreonine (Thr238). Lys258 participates in a covalent cross-link: Glycyl lysine isopeptide (Lys-Gly) (interchain with G-Cter in SUMO2). Phosphoserine is present on Ser297. Disordered stretches follow at residues 322–345 (DALK…PKPP), 400–424 (ATSD…TFPS), 559–584 (LQAD…RVIG), 657–709 (LTSA…ASAS), 785–818 (ATPK…DLAH), 849–893 (GLQR…SLTQ), 948–975 (YRLP…APST), 1003–1185 (ASPK…GSSV), and 1288–1314 (PLPA…RKPQ). Low complexity predominate over residues 330 to 341 (PKVPVTPSSSSL). Ser402, Ser405, and Ser408 each carry phosphoserine. A compositionally biased stretch (polar residues) spans 415 to 424 (GNTTHPTFPS). Composition is skewed to basic and acidic residues over residues 560-570 (QADEEREKNGS) and 673-684 (KVKECSPKKDPK). Ser570 carries the post-translational modification Phosphoserine. Low complexity predominate over residues 685–709 (APASVVASGGGPSTSSSTSIVASAS). Polar residues predominate over residues 792–801 (STQTAHSSSL). Over residues 849–879 (GLQRSSQIHASSSSQTHVSSSQAQAAASSHA) the composition is skewed to low complexity. Positions 883–893 (SEAQDASSLTQ) are enriched in polar residues. Residues 1003–1013 (ASPKLAASPKP) show a composition bias toward low complexity. The segment covering 1014–1028 (ATSPKPLPSPKPSVS) has biased composition (pro residues). Positions 1029–1040 (PKPSLSAKPSIS) are enriched in low complexity. Lys1036 is subject to N6-acetyllysine. Polar residues-rich tracts occupy residues 1057–1132 (PSSS…NSLS) and 1142–1153 (RGSNLNSSGANR). Ser1091 is subject to Phosphoserine. Lys1116 carries the post-translational modification N6-acetyllysine. The segment covering 1305 to 1314 (GDTKLPRKPQ) has biased composition (basic and acidic residues).

Belongs to the ubinuclein family.

The chain is Ubinuclein-2 (Ubn2) from Mus musculus (Mouse).